A 382-amino-acid chain; its full sequence is MNRPSWSTAFNIGGGFPIQWYGIIVSIGIIFAILMFVFKLIYCYKLQDNSFYFFIFIAVLTMVLGARLWSFVIGDSNFANNNFFDFRNGGLAIQGGILLTSIVGVIYFNFFLNSKTNKTKTIAELLNNKNEIKAVYVERNISVLVMLDLIAPCVLIGQAIGRWGNFFNQEVYGFALAGTMNDPQALANTQWGFLKILMPKVWDGMWIDGQFRIPLFLIESFFNTIFFVLIYFVMDFIRGVKSGTIGFSYFLATGIIRLILENFRDQTFYFQTSITTSILFIVVGILGIFYCQFIHVKLRNYFWTYFFLYAFYKVAAFFTTLFLNNRKQMAQQKFAFYEKSLPNKKRSFFEMKYYNDVTTPKIYRLTDQEMKLFDKLEAVTTS.

3 helical membrane passes run 18 to 38 (IQWYGIIVSIGIIFAILMFVF), 53 to 73 (FFIFIAVLTMVLGARLWSFVI), and 91 to 111 (LAIQGGILLTSIVGVIYFNFF). A 1,2-diacyl-sn-glycero-3-phospho-(1'-sn-glycerol) is bound at residue arginine 162. 4 consecutive transmembrane segments (helical) span residues 213 to 233 (IPLFLIESFFNTIFFVLIYFV), 243 to 263 (GTIGFSYFLATGIIRLILENF), 274 to 294 (ITTSILFIVVGILGIFYCQFI), and 302 to 322 (FWTYFFLYAFYKVAAFFTTLF).

The protein belongs to the Lgt family.

The protein resides in the cell membrane. It carries out the reaction L-cysteinyl-[prolipoprotein] + a 1,2-diacyl-sn-glycero-3-phospho-(1'-sn-glycerol) = an S-1,2-diacyl-sn-glyceryl-L-cysteinyl-[prolipoprotein] + sn-glycerol 1-phosphate + H(+). The protein operates within protein modification; lipoprotein biosynthesis (diacylglyceryl transfer). Functionally, catalyzes the transfer of the diacylglyceryl group from phosphatidylglycerol to the sulfhydryl group of the N-terminal cysteine of a prolipoprotein, the first step in the formation of mature lipoproteins. This is Phosphatidylglycerol--prolipoprotein diacylglyceryl transferase from Mycoplasma genitalium (strain ATCC 33530 / DSM 19775 / NCTC 10195 / G37) (Mycoplasmoides genitalium).